We begin with the raw amino-acid sequence, 467 residues long: 3-isopropylmalate dehydratase large subunit (467 aa).

3 residues coordinate [4Fe-4S] cluster: Cys-349, Cys-409, and Cys-412.

The protein belongs to the aconitase/IPM isomerase family. LeuC type 1 subfamily. In terms of assembly, heterodimer of LeuC and LeuD. [4Fe-4S] cluster serves as cofactor.

It catalyses the reaction (2R,3S)-3-isopropylmalate = (2S)-2-isopropylmalate. The protein operates within amino-acid biosynthesis; L-leucine biosynthesis; L-leucine from 3-methyl-2-oxobutanoate: step 2/4. Functionally, catalyzes the isomerization between 2-isopropylmalate and 3-isopropylmalate, via the formation of 2-isopropylmaleate. The sequence is that of 3-isopropylmalate dehydratase large subunit from Vibrio cholerae serotype O1 (strain ATCC 39541 / Classical Ogawa 395 / O395).